Here is a 381-residue protein sequence, read N- to C-terminus: Succinyl-diaminopimelate desuccinylase (381 aa).

Histidine 68 provides a ligand contact to Zn(2+). Aspartate 70 is an active-site residue. Aspartate 101 is a binding site for Zn(2+). Glutamate 135 serves as the catalytic Proton acceptor. 3 residues coordinate Zn(2+): glutamate 136, glutamate 164, and histidine 350.

The protein belongs to the peptidase M20A family. DapE subfamily. As to quaternary structure, homodimer. Zn(2+) serves as cofactor. Requires Co(2+) as cofactor.

The enzyme catalyses N-succinyl-(2S,6S)-2,6-diaminopimelate + H2O = (2S,6S)-2,6-diaminopimelate + succinate. It functions in the pathway amino-acid biosynthesis; L-lysine biosynthesis via DAP pathway; LL-2,6-diaminopimelate from (S)-tetrahydrodipicolinate (succinylase route): step 3/3. In terms of biological role, catalyzes the hydrolysis of N-succinyl-L,L-diaminopimelic acid (SDAP), forming succinate and LL-2,6-diaminopimelate (DAP), an intermediate involved in the bacterial biosynthesis of lysine and meso-diaminopimelic acid, an essential component of bacterial cell walls. This is Succinyl-diaminopimelate desuccinylase from Neisseria gonorrhoeae (strain NCCP11945).